The following is a 543-amino-acid chain: Glucose-6-phosphate isomerase (543 aa).

Glu353 functions as the Proton donor in the catalytic mechanism. Catalysis depends on residues His384 and Lys504.

The protein belongs to the GPI family.

It localises to the cytoplasm. The enzyme catalyses alpha-D-glucose 6-phosphate = beta-D-fructose 6-phosphate. Its pathway is carbohydrate biosynthesis; gluconeogenesis. It functions in the pathway carbohydrate degradation; glycolysis; D-glyceraldehyde 3-phosphate and glycerone phosphate from D-glucose: step 2/4. Catalyzes the reversible isomerization of glucose-6-phosphate to fructose-6-phosphate. The protein is Glucose-6-phosphate isomerase of Roseiflexus sp. (strain RS-1).